A 324-amino-acid polypeptide reads, in one-letter code: 3-hydroxyisobutyrate dehydrogenase, mitochondrial (324 aa).

The transit peptide at 1 to 25 (MSLRVMSPAMLNAWSQTLVRAMSTQ) directs the protein to the mitochondrion. NAD(+) contacts are provided by residues 29-58 (KNIGFVGLGNMGANMASNLIKAGHKLHVFD), 92-93 (LP), and Thr-121. Lys-196 is an active-site residue. Lys-271 contributes to the NAD(+) binding site.

It belongs to the HIBADH-related family. 3-hydroxyisobutyrate dehydrogenase subfamily.

It is found in the mitochondrion. The catalysed reaction is 3-hydroxy-2-methylpropanoate + NAD(+) = 2-methyl-3-oxopropanoate + NADH + H(+). Its pathway is amino-acid degradation; L-valine degradation. The chain is 3-hydroxyisobutyrate dehydrogenase, mitochondrial from Drosophila melanogaster (Fruit fly).